Here is a 335-residue protein sequence, read N- to C-terminus: D-alanine--D-alanine ligase (335 aa).

Residues 124-330 (KMWFSALGVP…FTEYLSDVIS (207 aa)) enclose the ATP-grasp domain. Residue 154–209 (AFDTWGSVFIKAASQGSSVGCYKVDVRDNIAKVLEEAFGYAPYVVVEKTIKARELE) coordinates ATP. Positions 284, 297, and 299 each coordinate Mg(2+).

This sequence belongs to the D-alanine--D-alanine ligase family. The cofactor is Mg(2+). Mn(2+) serves as cofactor.

The protein resides in the cytoplasm. The enzyme catalyses 2 D-alanine + ATP = D-alanyl-D-alanine + ADP + phosphate + H(+). Its pathway is cell wall biogenesis; peptidoglycan biosynthesis. Its function is as follows. Cell wall formation. The polypeptide is D-alanine--D-alanine ligase (Shewanella denitrificans (strain OS217 / ATCC BAA-1090 / DSM 15013)).